The following is a 385-amino-acid chain: Glucose-fructose oxidoreductase domain-containing protein 2 (385 aa).

Residues 1–25 (MKLLPGVGVFGTGSSARVLVPLLRA) form the signal peptide.

Belongs to the Gfo/Idh/MocA family.

It is found in the secreted. The protein resides in the extracellular space. It localises to the extracellular matrix. Its function is as follows. Promotes matrix assembly. The sequence is that of Glucose-fructose oxidoreductase domain-containing protein 2 (Gfod2) from Mus musculus (Mouse).